We begin with the raw amino-acid sequence, 2370 residues long: Genome polyprotein (2370 aa).

Gly112 carries N-myristoyl glycine; by host lipidation. Disordered regions lie at residues 140–173 (VGDMPTASSSEAPLGSNKGGSSTSPKSTSNGNVV) and 704–736 (GADGAEVQPAPTSDLSDGNPTTDPAPRDNFDYP). The segment covering 154–171 (GSNKGGSSTSPKSTSNGN) has biased composition (low complexity). The span at 713–725 (APTSDLSDGNPTT) shows a compositional bias: polar residues. One can recognise an SF3 helicase domain in the interval 1358–1522 (YSTALSAISL…AAFSAAAALK (165 aa)). 1384-1391 (GPPGTGKS) is a binding site for ATP. Residue Gly1597 is the site of N-myristoyl glycine; by host attachment. The helical transmembrane segment at 1646-1666 (IFAASSFLSLIAATLTIVRCL) threads the bilayer. The interval 1674-1696 (GAYSGTPVPKPRKKDLPKQPVYS) is disordered. Tyr1676 bears the O-(5'-phospho-RNA)-tyrosine mark. Residues 1697–1886 (GPVRRQGFDP…FSARLTPERV (190 aa)) enclose the Peptidase C3 domain. Active-site for protease 3C activity residues include His1745, Glu1776, and Cys1849. Residues 2007–2016 (SPGYPWTTQG) are compositionally biased toward polar residues. A disordered region spans residues 2007 to 2026 (SPGYPWTTQGRSRRSLFDED). The RdRp catalytic domain maps to 2122–2239 (SNVWSIDYSC…GSNQDFHPRE (118 aa)). Active-site for RdRp activity residues include Asp2128 and Asp2225.

In terms of assembly, interacts with capsid protein VP1. Interacts with capsid protein VP3. Interacts with capsid protein VP0. Interacts with capsid protein VP3. As to quaternary structure, interacts with capsid protein VP0. Interacts with capsid protein VP1. In terms of assembly, homodimer. Interacts with protein 2B. Interacts with protein 2C. Homodimer. Interacts with host ABCD3. Interacts with protein 2A. Interacts with host ACBD3. As to quaternary structure, homodimer. Interacts with host ABCD3. Interacts with protein 2A. Interacts with protein 3A. Interacts with protein 3C. Interacts with host ACBD3. In terms of assembly, homodimer. Interacts with host ABCD3 (via GOLD domain) and PI4KB; these interactions allow the formation of a viral protein/ACBD3/PI4KB complex in order to synthesize PI4P at the viral RNA replication sites. Interacts with protein 2C. Interacts with protein 3C. Protein 3C: Interacts with protein 2A. Protein 3C: Interacts with protein 2C. Specific enzymatic cleavages by the viral protease in vivo yield a variety of precursors and mature proteins. The leader protein-VP0 junction is cleaved by 3C proteinase. The VP1/2A junction is cleaved by the protein 3CD in association with protein 2A. In terms of processing, uridylylated by the polymerase and is covalently linked to the 5'-end of genomic RNA. This uridylylated form acts as a nucleotide-peptide primer for the polymerase.

The protein localises to the virion. It localises to the host cytoplasm. The protein resides in the host cytoplasmic vesicle membrane. It is found in the host Golgi apparatus membrane. It catalyses the reaction RNA(n) + a ribonucleoside 5'-triphosphate = RNA(n+1) + diphosphate. It carries out the reaction Selective cleavage of Gln-|-Gly bond in the poliovirus polyprotein. In other picornavirus reactions Glu may be substituted for Gln, and Ser or Thr for Gly.. The catalysed reaction is ATP + H2O = ADP + phosphate + H(+). In terms of biological role, required for viral RNA replication and viral RNA encapsidation. Does not have any proteolytic activity. Its function is as follows. Forms an icosahedral capsid of pseudo T=3 symmetry with capsid proteins VP0 and VP3. Together they form an icosahedral capsid composed of 60 copies of each VP0, VP1, and VP3. All the three latter proteins contain a beta-sheet structure called beta-barrel jelly roll. Functionally, forms an icosahedral capsid of pseudo T=3 symmetry with capsid proteins VP1 and VP3. Together they form an icosahedral capsid composed of 60 copies of each VP0, VP1, and VP3. All the three latter proteins contain a beta-sheet structure called beta-barrel jelly roll. Forms an icosahedral capsid of pseudo T=3 symmetry with capsid proteins VP0 and VP1. Together they form an icosahedral capsid composed of 60 copies of each VP0, VP1, and VP3. All the three latter proteins contain a beta-sheet structure called beta-barrel jelly roll. In terms of biological role, required for viral RNA replication. Does not have any proteolytic activity. Its function is as follows. Affects membrane integrity and causes an increase in membrane permeability. Functionally, induces and associates with structural rearrangements of intracellular membranes. Displays RNA-binding, nucleotide binding and NTPase activities. May play a role in virion morphogenesis and viral RNA encapsidation by interacting with the capsid protein VP3. Serves as membrane anchor via its hydrophobic domain. Plays an essential role in viral RNA replication by recruiting PI4KB at the viral replication sites, thereby allowing the formation of rearranged membranous structures where viral replication takes place. In terms of biological role, forms a primer, VPg-pU, which is utilized by the polymerase for the initiation of RNA chains. Its function is as follows. Cysteine protease that generates mature viral proteins from the precursor polyprotein. In addition to its proteolytic activity, it binds to viral RNA, and thus influences viral genome replication. RNA and substrate cooperatively bind to the protease. Functionally, replicates the genomic and antigenomic RNAs by recognizing replications specific signals. Performs VPg uridylylation. This is Genome polyprotein from Homo sapiens (Human).